The sequence spans 281 residues: Apolipoprotein E (281 aa).

An N-terminal signal peptide occupies residues 1-18; the sequence is MKVLWAALLIALLAGCQG. Tandem repeats lie at residues 82-103, 104-125, 126-147, 148-169, and 198-219. Residues 82–219 form a 5 X 22 AA approximate tandem repeats region; that stretch reads ALMDETMKEL…RLDEVKEQVE (138 aa). Met145 carries the methionine sulfoxide modification. Ser149 bears the Phosphoserine mark. The tract at residues 160–170 is LDL and other lipoprotein receptors binding; the sequence is HLRKLRTVSYT. Residues 164 to 167 and 193 to 200 each bind heparin; these read LRTV and GERLRTRM. The homooligomerization stretch occupies residues 230–281; it reads QQMRLQAEAFQARLKSWFEPLVEDMQRQWAGLVEKVQAAVGASAAPVPSDNH. Residues 242-254 are specificity for association with VLDL; that stretch reads RLKSWFEPLVEDM.

The protein belongs to the apolipoprotein A1/A4/E family. As to quaternary structure, homotetramer. May interact with ABCA1; functionally associated with ABCA1 in the biogenesis of HDLs. May interact with APP/A4 amyloid-beta peptide; the interaction is extremely stable in vitro but its physiological significance is unclear. May interact with MAPT. May interact with MAP2. In the cerebrospinal fluid, interacts with secreted SORL1. Interacts with PMEL; this allows the loading of PMEL luminal fragment on ILVs to induce fibril nucleation. In terms of processing, APOE exists as multiple glycosylated and sialylated glycoforms within cells and in plasma. The extent of glycosylation and sialylation are tissue and context specific. Glycated in plasma VLDL. Post-translationally, phosphorylated by FAM20C in the extracellular medium.

It is found in the secreted. The protein localises to the extracellular space. Its subcellular location is the extracellular matrix. It localises to the extracellular vesicle. The protein resides in the endosome. It is found in the multivesicular body. APOE is an apolipoprotein, a protein associating with lipid particles, that mainly functions in lipoprotein-mediated lipid transport between organs via the plasma and interstitial fluids. APOE is a core component of plasma lipoproteins and is involved in their production, conversion and clearance. Apolipoproteins are amphipathic molecules that interact both with lipids of the lipoprotein particle core and the aqueous environment of the plasma. As such, APOE associates with chylomicrons, chylomicron remnants, very low density lipoproteins (VLDL) and intermediate density lipoproteins (IDL) but shows a preferential binding to high-density lipoproteins (HDL). It also binds a wide range of cellular receptors including the LDL receptor/LDLR, the LDL receptor-related proteins LRP1, LRP2 and LRP8 and the very low-density lipoprotein receptor/VLDLR that mediate the cellular uptake of the APOE-containing lipoprotein particles. Finally, APOE also has a heparin-binding activity and binds heparan-sulfate proteoglycans on the surface of cells, a property that supports the capture and the receptor-mediated uptake of APOE-containing lipoproteins by cells. A main function of APOE is to mediate lipoprotein clearance through the uptake of chylomicrons, VLDLs, and HDLs by hepatocytes. APOE is also involved in the biosynthesis by the liver of VLDLs as well as their uptake by peripheral tissues ensuring the delivery of triglycerides and energy storage in muscle, heart and adipose tissues. By participating in the lipoprotein-mediated distribution of lipids among tissues, APOE plays a critical role in plasma and tissues lipid homeostasis. APOE is also involved in two steps of reverse cholesterol transport, the HDLs-mediated transport of cholesterol from peripheral tissues to the liver, and thereby plays an important role in cholesterol homeostasis. First, it is functionally associated with ABCA1 in the biogenesis of HDLs in tissues. Second, it is enriched in circulating HDLs and mediates their uptake by hepatocytes. APOE also plays an important role in lipid transport in the central nervous system, regulating neuron survival and sprouting. In Aotus nancymaae (Ma's night monkey), this protein is Apolipoprotein E (APOE).